Reading from the N-terminus, the 526-residue chain is MPASFLASLRAWIASSTIGQRILLALALGLLLITARVISKSKGTMPPGPRGLPLLGNIFQLPKLPWYRFTEWKEEFGPIFSLNFAGTPVVVLNSHEVVGDLLERKSTIYSDRPRFIMAGEILTGGMLIVFTGYGKVWRKLRRAGQEGLNVRASEKYQPLQESEARLLTTNMLREPAEWDAHLQRAAASSIASAVYAWPPLTKSDDGLVHRIDELMRRLVMAGLPGRYLVEIFPIMKHLPTWMAKWKREGLEWHRRDTEMFEGFYDNVARFMASGKYKPSLTAGLIERQEKNGLSKKEVSWLAGTMIGAGAETTAASLSVFMLAMTLYPDVMRKAQAEIDALVGRERMPTFADRPHLPYVCALVKEVLRWRPVGPVGVPRRTSEDDWYKGYFIPKGTLVIANVWAMNRDPAIYPDYDEFRPDRFLDASGNEIDIAGTHGQGHVTYGFGRRICIGMHVANQALFIDIAALLWAFNIEAPTGPDGTPILPSRTDFVDEGLVFRPAAFRCKVTPRIDDVATMLATLEKNA.

The next 3 helical transmembrane spans lie at 13–33 (IASSTIGQRILLALALGLLLI), 115–135 (FIMAGEILTGGMLIVFTGYGK), and 306–326 (IGAGAETTAASLSVFMLAMTL). Heme is bound at residue cysteine 451.

It belongs to the cytochrome P450 family. Requires heme as cofactor.

Its subcellular location is the membrane. It participates in secondary metabolite biosynthesis. In terms of biological role, cytochrome P450 monooxygenase that is able to use delta(6)-protoilludene as a substrate to produce delta(6)-protoilludene-8-ol. The protein is Cytochrome P450 monooxygenase 253 of Postia placenta (strain ATCC 44394 / Madison 698-R) (Brown rot fungus).